The primary structure comprises 73 residues: MKILGVTGFILICLLAISVLMDMLQGFSLTKAVYNNMSSFKMTTFAEWVVLLFFVLVLVREMYVIYKSKKKNP.

An N-terminal signal peptide occupies residues 1–22 (MKILGVTGFILICLLAISVLMD). The helical transmembrane segment at 44-66 (TFAEWVVLLFFVLVLVREMYVIY) threads the bilayer.

The protein resides in the membrane. This is an uncharacterized protein from Bacillus subtilis (strain 168).